Reading from the N-terminus, the 531-residue chain is Achacin (531 aa).

A signal peptide spans 1-22 (MLLLNSALFILCLVCWLPGTSS). Residues 23–29 (SRVLTRR) constitute a propeptide that is removed on maturation. N-linked (GlcNAc...) asparagine glycans are attached at residues N112, N150, N308, and N392.

The protein to A.kurodai aplysianin-A. Homodimer. Collar tissue.

Antibacterial glycoprotein. In Lissachatina fulica (Giant African land snail), this protein is Achacin.